The sequence spans 299 residues: Undecaprenyl-diphosphatase (299 aa).

A run of 8 helical transmembrane segments spans residues 10 to 32, 63 to 83, 112 to 132, 143 to 163, 178 to 198, 213 to 233, 243 to 263, and 276 to 296; these read LFSLMILLAATSELLAACWRNLV, PGVSATAVIQLGSILAVIAYF, LAIAIGTMPILLAGMAIKLFW, LPSIAVVSIVMALLLALAESF, GFVVGLAQALALIPGVSRSGS, AARFCFLLGIPAITLAGLVEL, GGVLPLLVGIVSAAFVSWLAI, and WIFVVYRLLFGVLVLAWWLSG.

Belongs to the UppP family.

The protein resides in the cell inner membrane. It carries out the reaction di-trans,octa-cis-undecaprenyl diphosphate + H2O = di-trans,octa-cis-undecaprenyl phosphate + phosphate + H(+). Its function is as follows. Catalyzes the dephosphorylation of undecaprenyl diphosphate (UPP). Confers resistance to bacitracin. This Prochlorococcus marinus (strain MIT 9313) protein is Undecaprenyl-diphosphatase.